A 158-amino-acid chain; its full sequence is MQGRLSAWLVKHGLVHRSLGFDYQGIETLQIKPEDWHSIAVILYVYGYNYLRSQCAYDVAPGGLLASVYHLTRIEYGVDQPEEVCIKVFAPRRNPRIPSVFWVWKSADFQERESYDMFGISYDNHPRLKRILMPESWIGWPLRKDYIVPNFYEIQDAY.

The protein belongs to the complex I 30 kDa subunit family. As to quaternary structure, NDH is composed of at least 16 different subunits, 5 of which are encoded in the nucleus.

It localises to the plastid. The protein localises to the chloroplast thylakoid membrane. The enzyme catalyses a plastoquinone + NADH + (n+1) H(+)(in) = a plastoquinol + NAD(+) + n H(+)(out). It carries out the reaction a plastoquinone + NADPH + (n+1) H(+)(in) = a plastoquinol + NADP(+) + n H(+)(out). NDH shuttles electrons from NAD(P)H:plastoquinone, via FMN and iron-sulfur (Fe-S) centers, to quinones in the photosynthetic chain and possibly in a chloroplast respiratory chain. The immediate electron acceptor for the enzyme in this species is believed to be plastoquinone. Couples the redox reaction to proton translocation, and thus conserves the redox energy in a proton gradient. The chain is NAD(P)H-quinone oxidoreductase subunit J, chloroplastic from Spinacia oleracea (Spinach).